Reading from the N-terminus, the 149-residue chain is Transcriptional repressor NrdR (149 aa).

A zinc finger spans residues 3-34 (CPFCSAVDTKVIDSRLVGEGTQVRRRRQCVIC). Residues 49-139 (PRVIKSNDVR…VYRSFEDIRE (91 aa)) form the ATP-cone domain.

This sequence belongs to the NrdR family. The cofactor is Zn(2+).

Its function is as follows. Negatively regulates transcription of bacterial ribonucleotide reductase nrd genes and operons by binding to NrdR-boxes. The protein is Transcriptional repressor NrdR of Sodalis glossinidius (strain morsitans).